Here is a 457-residue protein sequence, read N- to C-terminus: Adenylosuccinate synthetase isozyme 1 (457 aa).

Residues 1–25 (MSGTRASNDRPPSAGGVKRGRLQHE) form a disordered region. Residues 42 to 48 (GDEGKGK) and 70 to 72 (GHT) each bind GTP. Aspartate 43 (proton acceptor) is an active-site residue. Aspartate 43 and glycine 70 together coordinate Mg(2+). Substrate is bound at residue aspartate 43. IMP contacts are provided by residues 43–46 (DEGK), 68–71 (NAGH), threonine 163, arginine 177, asparagine 256, threonine 271, and arginine 335. Histidine 71 functions as the Proton donor in the catalytic mechanism. 331-337 (VTTGRKR) lines the substrate pocket. Residues arginine 337, 363–365 (KLD), and 445–448 (GVGK) each bind GTP.

Belongs to the adenylosuccinate synthetase family. Homodimer. Mg(2+) is required as a cofactor. As to expression, predominantly expressed in the striated muscle tissues.

The protein localises to the cytoplasm. The catalysed reaction is IMP + L-aspartate + GTP = N(6)-(1,2-dicarboxyethyl)-AMP + GDP + phosphate + 2 H(+). It participates in purine metabolism; AMP biosynthesis via de novo pathway; AMP from IMP: step 1/2. Component of the purine nucleotide cycle (PNC), which interconverts IMP and AMP to regulate the nucleotide levels in various tissues, and which contributes to glycolysis and ammoniagenesis. Catalyzes the first committed step in the biosynthesis of AMP from IMP. This Sus scrofa (Pig) protein is Adenylosuccinate synthetase isozyme 1.